Reading from the N-terminus, the 223-residue chain is uncharacterized protein (223 aa).

This is an uncharacterized protein from Aquifex aeolicus (strain VF5).